A 210-amino-acid chain; its full sequence is NADH dehydrogenase [ubiquinone] iron-sulfur protein 8, mitochondrial (210 aa).

The N-terminal 34 residues, 1–34 (MRCLTTPVLLRALAQAARAGPPGGRSLHSSAVAA), are a transit peptide targeting the mitochondrion. 4Fe-4S ferredoxin-type domains are found at residues 102–131 (RRYP…IEAE) and 141–170 (TRYD…EGPN). [4Fe-4S] cluster-binding residues include cysteine 111, cysteine 114, cysteine 117, cysteine 121, cysteine 150, cysteine 153, cysteine 156, and cysteine 160.

This sequence belongs to the complex I 23 kDa subunit family. Core subunit of respiratory chain NADH dehydrogenase (Complex I) which is composed of 45 different subunits. This is a component of the iron-sulfur (IP) fragment of the enzyme. Interacts with RAB5IF. It depends on [4Fe-4S] cluster as a cofactor.

It localises to the mitochondrion inner membrane. The catalysed reaction is a ubiquinone + NADH + 5 H(+)(in) = a ubiquinol + NAD(+) + 4 H(+)(out). In terms of biological role, core subunit of the mitochondrial membrane respiratory chain NADH dehydrogenase (Complex I) which catalyzes electron transfer from NADH through the respiratory chain, using ubiquinone as an electron acceptor. Essential for the catalytic activity and assembly of complex I. The polypeptide is NADH dehydrogenase [ubiquinone] iron-sulfur protein 8, mitochondrial (NDUFS8) (Gorilla gorilla gorilla (Western lowland gorilla)).